We begin with the raw amino-acid sequence, 626 residues long: Mitogen-activated protein kinase kinase kinase 3 (626 aa).

The PB1 domain occupies 44-123 (DVRIKFEHNG…KSLRILLLSQ (80 aa)). Disordered stretches follow at residues 125-184 (RNHT…YVPE) and 218-273 (SSAE…VKGG). Polar residues-rich tracts occupy residues 128 to 137 (TSSSPHSGVS), 144 to 155 (PSQSAGDINTIY), 165 to 174 (LSVSSQNPGR), and 219 to 247 (SAEN…QMSR). Phosphoserine occurs at positions 147 and 166. Residues S250 and S312 each carry the phosphoserine modification. Residues 250–270 (SFPDNRKECSDRETQLYDKGV) are compositionally biased toward basic and acidic residues. S337 carries the post-translational modification Phosphoserine; by SGK1. S340 carries the post-translational modification Phosphoserine. A Protein kinase domain is found at 362–622 (WRRGKLLGQG…AEELLTHHFA (261 aa)). ATP is bound by residues 368–376 (LGQGAFGRV) and K391. The Proton acceptor role is filled by D489.

The protein belongs to the protein kinase superfamily. STE Ser/Thr protein kinase family. MAP kinase kinase kinase subfamily. In terms of assembly, binds both upstream activators and downstream substrates in multimolecular complexes. Part of a complex with MAP2K3, RAC1 and CCM2. Interacts with MAP2K5 and SPAG9. It depends on Mg(2+) as a cofactor. Phosphorylation at Ser-166 and Ser-337 by SGK1 inhibits its activity.

The catalysed reaction is L-seryl-[protein] + ATP = O-phospho-L-seryl-[protein] + ADP + H(+). It catalyses the reaction L-threonyl-[protein] + ATP = O-phospho-L-threonyl-[protein] + ADP + H(+). With respect to regulation, activated by phosphorylation on Thr-530. Component of a protein kinase signal transduction cascade. Mediates activation of the NF-kappa-B, AP1 and DDIT3 transcriptional regulators. This Mus musculus (Mouse) protein is Mitogen-activated protein kinase kinase kinase 3 (Map3k3).